A 345-amino-acid chain; its full sequence is MSNYWLNIYKPRGISSAQLVSIVKKILGKTKIGHAGTLDVEAEGILPFAVGEATKLIRLLIDARKTYIFTVKFGMQTNSGDCAGKVIATKDCVPSQEEAYAVCSKFIGSVTQIPPAFSALKVNGVRAYKLAREEKKVELKPRNITIYDLKCLNFDEKNATATYYTECSKGTYIRTLAEDLALSLQSLGFVIELRRTQVGIFKEENAIRIKSPDEITKNALEAKSIKIEAILDDILVLDATDSQAQQIKYGQKCLFNYEKDFRHLAKFAYREEFKGNTERSTTAYTLVREDASTGLTYKLPLEVEFGKMSIDLLWVRYKGTLLAIGSLNKSCFNSLRVFNLTQDFF.

Asp-39 serves as the catalytic Nucleophile.

It belongs to the pseudouridine synthase TruB family. Type 1 subfamily.

It catalyses the reaction uridine(55) in tRNA = pseudouridine(55) in tRNA. Its function is as follows. Responsible for synthesis of pseudouridine from uracil-55 in the psi GC loop of transfer RNAs. This is tRNA pseudouridine synthase B from Rickettsia rickettsii (strain Iowa).